A 272-amino-acid chain; its full sequence is NH(3)-dependent NAD(+) synthetase (272 aa).

45–52 contacts ATP; that stretch reads GISGGQDS. Aspartate 51 contacts Mg(2+). Arginine 138 provides a ligand contact to deamido-NAD(+). Threonine 158 is a binding site for ATP. A Mg(2+)-binding site is contributed by glutamate 163. Deamido-NAD(+) contacts are provided by lysine 171 and aspartate 178. Positions 187 and 209 each coordinate ATP. 258-259 contributes to the deamido-NAD(+) binding site; sequence HK.

This sequence belongs to the NAD synthetase family. Homodimer.

It catalyses the reaction deamido-NAD(+) + NH4(+) + ATP = AMP + diphosphate + NAD(+) + H(+). The protein operates within cofactor biosynthesis; NAD(+) biosynthesis; NAD(+) from deamido-NAD(+) (ammonia route): step 1/1. Catalyzes the ATP-dependent amidation of deamido-NAD to form NAD. Uses ammonia as a nitrogen source. This Bacillus cereus (strain 03BB102) protein is NH(3)-dependent NAD(+) synthetase.